Here is a 163-residue protein sequence, read N- to C-terminus: NADH-quinone oxidoreductase subunit I (163 aa).

2 consecutive 4Fe-4S ferredoxin-type domains span residues 53–83 (LRRYPNGEERCIACKLCEAICPAQAITIEAG) and 94–123 (VRYDIDMVKCIYCGFCQEACPVDAIVEGPN). Cys63, Cys66, Cys69, Cys73, Cys103, Cys106, Cys109, and Cys113 together coordinate [4Fe-4S] cluster.

The protein belongs to the complex I 23 kDa subunit family. In terms of assembly, NDH-1 is composed of 14 different subunits. Subunits NuoA, H, J, K, L, M, N constitute the membrane sector of the complex. [4Fe-4S] cluster serves as cofactor.

Its subcellular location is the cell inner membrane. It carries out the reaction a quinone + NADH + 5 H(+)(in) = a quinol + NAD(+) + 4 H(+)(out). Its function is as follows. NDH-1 shuttles electrons from NADH, via FMN and iron-sulfur (Fe-S) centers, to quinones in the respiratory chain. The immediate electron acceptor for the enzyme in this species is believed to be ubiquinone. Couples the redox reaction to proton translocation (for every two electrons transferred, four hydrogen ions are translocated across the cytoplasmic membrane), and thus conserves the redox energy in a proton gradient. This is NADH-quinone oxidoreductase subunit I from Brucella anthropi (strain ATCC 49188 / DSM 6882 / CCUG 24695 / JCM 21032 / LMG 3331 / NBRC 15819 / NCTC 12168 / Alc 37) (Ochrobactrum anthropi).